The sequence spans 631 residues: Putative ATP-dependent DNA helicase Q1 (631 aa).

In terms of domain architecture, Helicase ATP-binding spans 118 to 293 (INAVMSKEDA…KDMLGIQAAL (176 aa)). Residue 131–138 (LSTGGGKS) coordinates ATP. The DEVH box signature appears at 237-240 (DEVH). Residues 318-466 (CTEEIAKTIK…NLYNMVRYAA (149 aa)) enclose the Helicase C-terminal domain. Cysteine 471, cysteine 489, cysteine 493, and cysteine 496 together coordinate Zn(2+). Positions 610 to 631 (ESKSRKRKASSSVEEEDVMVLD) are disordered. Acidic residues predominate over residues 622-631 (VEEEDVMVLD).

Belongs to the helicase family. RecQ subfamily. Requires Zn(2+) as cofactor.

The protein resides in the nucleus. It catalyses the reaction Couples ATP hydrolysis with the unwinding of duplex DNA by translocating in the 3'-5' direction.. The enzyme catalyses ATP + H2O = ADP + phosphate + H(+). Functionally, DNA helicase that may play a role in the repair of DNA that is damaged by ultraviolet light or other mutagens. Exhibits a magnesium-dependent ATP-dependent DNA-helicase activity that unwinds single- and double-stranded DNA in a 3'-5' direction. The sequence is that of Putative ATP-dependent DNA helicase Q1 from Caenorhabditis elegans.